The sequence spans 485 residues: Inosine-5'-monophosphate dehydrogenase (485 aa).

2 consecutive CBS domains span residues 99-154 (IVED…TVKE) and 156-212 (MTRE…KNAV). Residues aspartate 247 and 294–296 (GIG) each bind NAD(+). Positions 296 and 298 each coordinate K(+). Serine 299 is an IMP binding site. Cysteine 301 serves as a coordination point for K(+). Cysteine 301 functions as the Thioimidate intermediate in the catalytic mechanism. IMP contacts are provided by residues 334–336 (DGG), 357–358 (GN), and 381–385 (YRGMG). Catalysis depends on arginine 397, which acts as the Proton acceptor. Glutamate 412 is an IMP binding site. Glutamate 466, serine 467, and histidine 468 together coordinate K(+).

This sequence belongs to the IMPDH/GMPR family. As to quaternary structure, homotetramer. K(+) is required as a cofactor.

It carries out the reaction IMP + NAD(+) + H2O = XMP + NADH + H(+). It functions in the pathway purine metabolism; XMP biosynthesis via de novo pathway; XMP from IMP: step 1/1. Its activity is regulated as follows. Mycophenolic acid (MPA) is a non-competitive inhibitor that prevents formation of the closed enzyme conformation by binding to the same site as the amobile flap. In contrast, mizoribine monophosphate (MZP) is a competitive inhibitor that induces the closed conformation. MPA is a potent inhibitor of mammalian IMPDHs but a poor inhibitor of the bacterial enzymes. MZP is a more potent inhibitor of bacterial IMPDH. In terms of biological role, catalyzes the conversion of inosine 5'-phosphate (IMP) to xanthosine 5'-phosphate (XMP), the first committed and rate-limiting step in the de novo synthesis of guanine nucleotides, and therefore plays an important role in the regulation of cell growth. In Pyrococcus furiosus (strain ATCC 43587 / DSM 3638 / JCM 8422 / Vc1), this protein is Inosine-5'-monophosphate dehydrogenase.